Consider the following 215-residue polypeptide: Leucyl/phenylalanyl-tRNA--protein transferase (215 aa).

This sequence belongs to the L/F-transferase family.

It is found in the cytoplasm. The enzyme catalyses N-terminal L-lysyl-[protein] + L-leucyl-tRNA(Leu) = N-terminal L-leucyl-L-lysyl-[protein] + tRNA(Leu) + H(+). The catalysed reaction is N-terminal L-arginyl-[protein] + L-leucyl-tRNA(Leu) = N-terminal L-leucyl-L-arginyl-[protein] + tRNA(Leu) + H(+). It catalyses the reaction L-phenylalanyl-tRNA(Phe) + an N-terminal L-alpha-aminoacyl-[protein] = an N-terminal L-phenylalanyl-L-alpha-aminoacyl-[protein] + tRNA(Phe). Functions in the N-end rule pathway of protein degradation where it conjugates Leu, Phe and, less efficiently, Met from aminoacyl-tRNAs to the N-termini of proteins containing an N-terminal arginine or lysine. The polypeptide is Leucyl/phenylalanyl-tRNA--protein transferase (Campylobacter jejuni subsp. jejuni serotype O:6 (strain 81116 / NCTC 11828)).